Reading from the N-terminus, the 40-residue chain is Protein YneP (40 aa).

This is Protein YneP from Escherichia coli (strain K12).